A 172-amino-acid chain; its full sequence is Protein GrpE (172 aa).

Residues Met1–Lys24 are disordered.

This sequence belongs to the GrpE family. In terms of assembly, homodimer.

It is found in the cytoplasm. In terms of biological role, participates actively in the response to hyperosmotic and heat shock by preventing the aggregation of stress-denatured proteins, in association with DnaK and GrpE. It is the nucleotide exchange factor for DnaK and may function as a thermosensor. Unfolded proteins bind initially to DnaJ; upon interaction with the DnaJ-bound protein, DnaK hydrolyzes its bound ATP, resulting in the formation of a stable complex. GrpE releases ADP from DnaK; ATP binding to DnaK triggers the release of the substrate protein, thus completing the reaction cycle. Several rounds of ATP-dependent interactions between DnaJ, DnaK and GrpE are required for fully efficient folding. In Xanthomonas oryzae pv. oryzae (strain PXO99A), this protein is Protein GrpE.